The following is a 778-amino-acid chain: Lon protease (778 aa).

In terms of domain architecture, Lon N-terminal spans 6-207 (LPLMALRDMV…TVISMLNSNI (202 aa)). Position 356–363 (356–363 (GPPGVGKT)) interacts with ATP. Residues 592–773 (EDQIGSTTGL…DQVLKHALVG (182 aa)) form the Lon proteolytic domain. Catalysis depends on residues serine 679 and lysine 722.

The protein belongs to the peptidase S16 family. As to quaternary structure, homohexamer. Organized in a ring with a central cavity.

It localises to the cytoplasm. It carries out the reaction Hydrolysis of proteins in presence of ATP.. In terms of biological role, ATP-dependent serine protease that mediates the selective degradation of mutant and abnormal proteins as well as certain short-lived regulatory proteins. Required for cellular homeostasis and for survival from DNA damage and developmental changes induced by stress. Degrades polypeptides processively to yield small peptide fragments that are 5 to 10 amino acids long. Binds to DNA in a double-stranded, site-specific manner. This is Lon protease from Rickettsia conorii (strain ATCC VR-613 / Malish 7).